A 393-amino-acid chain; its full sequence is Adaptive-response sensory kinase SasA (393 aa).

The 223-residue stretch at 171–393 (MLAHDLRSPL…CFHFTLPVFR (223 aa)) folds into the Histidine kinase domain. His174 carries the post-translational modification Phosphohistidine; by autocatalysis.

As to quaternary structure, homooligomerizes. Interacts with KaiC. Participates in the KaiABC clock complex, whose core is composed of a KaiC homohexamer, 6 KaiB and up to 6 KaiA dimers. SasA and KaiB(fs) compete to bind to KaiC.

It catalyses the reaction ATP + protein L-histidine = ADP + protein N-phospho-L-histidine.. Its function is as follows. Member of the two-component regulatory system SasA/RpaA involved in genome-wide circadian gene expression. One of several clock output pathways. Participates in the Kai clock protein complex, the main circadian regulator in cyanobacteria, via its interaction with KaiC. KaiC enhances the autophosphorylation activity of SasA, which then transfers its phosphate group to RpaA to activate it. In addition to its output function, recruits fold-shifted KaiB (KaiB(fs)) to KaiC to cooperatively form the KaiB(6):KaiC(6) complex (independent of SasA kinase activity). Required for robustness of the circadian rhythm of gene expression and is involved in clock output, also required for adaptation to light/dark cycles. This is Adaptive-response sensory kinase SasA from Gloeothece citriformis (strain PCC 7424) (Cyanothece sp. (strain PCC 7424)).